The following is a 276-amino-acid chain: Outer plastidial membrane protein porin (276 aa).

This sequence belongs to the eukaryotic mitochondrial porin (TC 1.B.8.1) family.

It localises to the plastid outer membrane. In terms of biological role, forms a channel through the cell membrane that allows diffusion of small hydrophilic molecules. The channel adopts an open conformation at low or zero membrane potential and a closed conformation at potentials above 30-40 mV. The open state has a weak anion selectivity whereas the closed state is cation-selective. The chain is Outer plastidial membrane protein porin (POR1) from Pisum sativum (Garden pea).